Consider the following 328-residue polypeptide: Phosphatidylglycerol--prolipoprotein diacylglyceryl transferase (328 aa).

3 helical membrane-spanning segments follow: residues 15–35 (VIQG…ILIS), 57–77 (IFMF…STLV), and 106–126 (GMAI…TINT). A 1,2-diacyl-sn-glycero-3-phospho-(1'-sn-glycerol) is bound at residue Arg156. The next 2 membrane-spanning stretches (helical) occupy residues 242-262 (GFIF…IEYL) and 289-309 (ISMG…WIIV).

This sequence belongs to the Lgt family.

The protein resides in the cell inner membrane. The catalysed reaction is L-cysteinyl-[prolipoprotein] + a 1,2-diacyl-sn-glycero-3-phospho-(1'-sn-glycerol) = an S-1,2-diacyl-sn-glyceryl-L-cysteinyl-[prolipoprotein] + sn-glycerol 1-phosphate + H(+). It participates in protein modification; lipoprotein biosynthesis (diacylglyceryl transfer). Functionally, catalyzes the transfer of the diacylglyceryl group from phosphatidylglycerol to the sulfhydryl group of the N-terminal cysteine of a prolipoprotein, the first step in the formation of mature lipoproteins. The polypeptide is Phosphatidylglycerol--prolipoprotein diacylglyceryl transferase (Borreliella burgdorferi (strain ZS7) (Borrelia burgdorferi)).